A 108-amino-acid chain; its full sequence is MIYMLVFLDRQQLVHIFLFRSRGTTNIIKACYFFFLLFCKLLNAAEAPLLAISLSKFVWLLLRVCKTSYLLLLITMLEGAEYFSLVVGNSICGSGGEGVGCRYPVVLI.

The next 2 membrane-spanning stretches (helical) occupy residues 32-52 and 68-88; these read YFFF…LLAI and SYLL…LVVG.

The protein resides in the membrane. This is an uncharacterized protein from Saccharomyces cerevisiae (strain ATCC 204508 / S288c) (Baker's yeast).